Reading from the N-terminus, the 298-residue chain is MIIGGSASQDLAAHVAEELNDDLCYVETKKFPDGERYLRVDGEIDDEVTVIQSTGYPQDENLMELLFLISNLKDLGAKKVRVVVPYMGYARQEKRFHDGEAVSAKIVANLIQSAGADEFITFNIHEKCVLDFFDIPTTNISAMGAIAEYIDEKIDEKPLIVAPDKGAYPFAQEIAEILDCECTYLSKVRLGPDKVETRIVDVEGSSDETVNVDSVKGKKAFIIDDIIATGGTIVNAVKILKEYGAKSVDVCCVHPILVNGATMRIYAAGANSLISTNSLSADSSRVSLAKSIANVLRD.

Residues 33 to 35 and 91 to 92 contribute to the ATP site; these read DGE and RQ. Positions 125 and 164 each coordinate Mg(2+). The active site involves Lys187. D-ribose 5-phosphate is bound by residues Arg189 and Asp224.

Belongs to the ribose-phosphate pyrophosphokinase family. Class III (archaeal) subfamily. The cofactor is Mg(2+).

The protein resides in the cytoplasm. It catalyses the reaction D-ribose 5-phosphate + ATP = 5-phospho-alpha-D-ribose 1-diphosphate + AMP + H(+). It participates in metabolic intermediate biosynthesis; 5-phospho-alpha-D-ribose 1-diphosphate biosynthesis; 5-phospho-alpha-D-ribose 1-diphosphate from D-ribose 5-phosphate (route I): step 1/1. Its function is as follows. Involved in the biosynthesis of the central metabolite phospho-alpha-D-ribosyl-1-pyrophosphate (PRPP) via the transfer of pyrophosphoryl group from ATP to 1-hydroxyl of ribose-5-phosphate (Rib-5-P). This is Ribose-phosphate pyrophosphokinase from Methanobrevibacter smithii (strain ATCC 35061 / DSM 861 / OCM 144 / PS).